A 968-amino-acid chain; its full sequence is RNA polymerase-associated protein RapA (968 aa).

The 171-residue stretch at 164 to 334 folds into the Helicase ATP-binding domain; sequence DVGRRHAPRV…FARLRLLDPN (171 aa). 177 to 184 lines the ATP pocket; the sequence is DEVGLGKT. The DEAH box motif lies at 280–283; it reads DEAH. The Helicase C-terminal domain occupies 490–685; sequence RVEWLMGYLT…ALKAQLEQGR (196 aa).

This sequence belongs to the SNF2/RAD54 helicase family. RapA subfamily. Interacts with the RNAP. Has a higher affinity for the core RNAP than for the holoenzyme. Its ATPase activity is stimulated by binding to RNAP.

In terms of biological role, transcription regulator that activates transcription by stimulating RNA polymerase (RNAP) recycling in case of stress conditions such as supercoiled DNA or high salt concentrations. Probably acts by releasing the RNAP, when it is trapped or immobilized on tightly supercoiled DNA. Does not activate transcription on linear DNA. Probably not involved in DNA repair. This Salmonella schwarzengrund (strain CVM19633) protein is RNA polymerase-associated protein RapA.